Consider the following 178-residue polypeptide: Bifunctional protein PyrR (178 aa).

Residues 41–42 (RR), 103–111 (DDVLYTGRT), and Arg-136 each bind substrate. The PRPP-binding signature appears at 99–111 (VILVDDVLYTGRT).

It belongs to the purine/pyrimidine phosphoribosyltransferase family. PyrR subfamily. In terms of assembly, homodimer and homohexamer; in equilibrium.

It carries out the reaction UMP + diphosphate = 5-phospho-alpha-D-ribose 1-diphosphate + uracil. Functionally, regulates transcriptional attenuation of the pyrimidine nucleotide (pyr) operon by binding in a uridine-dependent manner to specific sites on pyr mRNA. This disrupts an antiterminator hairpin in the RNA and favors formation of a downstream transcription terminator, leading to a reduced expression of downstream genes. Its function is as follows. Also displays a weak uracil phosphoribosyltransferase activity which is not physiologically significant. The chain is Bifunctional protein PyrR from Clostridium acetobutylicum (strain ATCC 824 / DSM 792 / JCM 1419 / IAM 19013 / LMG 5710 / NBRC 13948 / NRRL B-527 / VKM B-1787 / 2291 / W).